The sequence spans 213 residues: Imidazoleglycerol-phosphate dehydratase (213 aa).

It belongs to the imidazoleglycerol-phosphate dehydratase family.

The protein localises to the cytoplasm. The catalysed reaction is D-erythro-1-(imidazol-4-yl)glycerol 3-phosphate = 3-(imidazol-4-yl)-2-oxopropyl phosphate + H2O. It functions in the pathway amino-acid biosynthesis; L-histidine biosynthesis; L-histidine from 5-phospho-alpha-D-ribose 1-diphosphate: step 6/9. This Trichodesmium erythraeum (strain IMS101) protein is Imidazoleglycerol-phosphate dehydratase.